Reading from the N-terminus, the 215-residue chain is Probable transaldolase (215 aa).

Lys83 functions as the Schiff-base intermediate with substrate in the catalytic mechanism.

It belongs to the transaldolase family. Type 3B subfamily.

The protein resides in the cytoplasm. The enzyme catalyses D-sedoheptulose 7-phosphate + D-glyceraldehyde 3-phosphate = D-erythrose 4-phosphate + beta-D-fructose 6-phosphate. Its pathway is carbohydrate degradation; pentose phosphate pathway; D-glyceraldehyde 3-phosphate and beta-D-fructose 6-phosphate from D-ribose 5-phosphate and D-xylulose 5-phosphate (non-oxidative stage): step 2/3. Functionally, transaldolase is important for the balance of metabolites in the pentose-phosphate pathway. This is Probable transaldolase from Methanococcus maripaludis (strain C7 / ATCC BAA-1331).